A 1377-amino-acid polypeptide reads, in one-letter code: Clustered mitochondria protein homolog (1377 aa).

The segment at 1–61 is disordered; the sequence is MLKSIQRNGK…GETKKKSDSE (61 aa). The 243-residue stretch at 353 to 595 folds into the Clu domain; that stretch reads RAEDTFSSKL…RTFPPDVNFL (243 aa). A TPR 1 repeat occupies 519–552; that stretch reads VYGSIDFGKTVLSHEKYLELLNNAGKHLKIYPHS. Disordered regions lie at residues 651–700 and 886–917; these read NKRQ…VPKV and DVLT…KSSF. The segment covering 655 to 690 has biased composition (basic and acidic residues); that stretch reads QKQDTPKEETKAIEPAAKEDSANNNKEEPAAKKGEP. Residues 886 to 896 show a composition bias toward polar residues; that stretch reads DVLTKSGSSGK. 3 TPR repeats span residues 1022–1055, 1148–1181, and 1183–1216; these read AYNF…LNNV, ALLD…NIKY, and GEKS…EKET. The interval 1310–1377 is disordered; it reads KEGGAAGESS…SKANPVASSS (68 aa). The span at 1364-1377 shows a compositional bias: low complexity; it reads ASSSSKANPVASSS.

This sequence belongs to the CLU family.

The protein resides in the cytoplasm. Its function is as follows. mRNA-binding protein involved in proper cytoplasmic distribution of mitochondria. In Culex quinquefasciatus (Southern house mosquito), this protein is Clustered mitochondria protein homolog.